We begin with the raw amino-acid sequence, 105 residues long: MSPFKKTYVLKLYVAGNTPNSVRALKMLKNILEQEFQGVYALKVIDVLKNPQLAEEDKILATPTLAKILPPPVRKIIGDLSDREKVLIGLDLLYDEIREREAEDQ.

This sequence belongs to the KaiB family. Homotetramer in solution and crystals formed by 2 dimers. Only elutes as a homotetramer in size exclusion chromatography, interacts with KaiC1 and KaiC3. The KaiABC complex composition changes during the circadian cycle to control KaiC phosphorylation. Complexes KaiC(6), KaiA(2-4):KaiC(6), KaiB(6):KaiC(6) and KaiC(6):KaiB(6):KaiA(12) are among the most important forms, many form cooperatively. Undergoes a major conformational rearrangment; in the free state forms homotetramers as a dimer of dimers. When bound to the CI domain of KaiC switches to a monomeric thioredoxin-fold (KaiB(fs)). KaiB(fs) binds CikA, leading it to dephosphorylate phospho-RpaA.

Key component of the KaiABC oscillator complex, which constitutes the main circadian regulator in cyanobacteria. Complex composition changes during the circadian cycle to control KaiC phosphorylation. KaiA stimulates KaiC autophosphorylation, while KaiB sequesters KaiA, leading to KaiC autodephosphorylation. Phospho-Ser-431 KaiC accumulation triggers binding of KaiB to form the KaiB(6):KaiC(6) complex, leading to changes in output regulators CikA and SasA. KaiB switches to a thioredoxin-like fold (KaiB(fs)) when bound to KaiC. KaiB(6):KaiC(6) formation exposes a site for KaiA binding that sequesters KaiA from KaiC, making the KaiC(6):KaiB(6):KaiA(12) complex that results in KaiC autodephosphorylation. Functionally, component of the oscillator and circadian clock in this organism, enhances fitness in a rhythmic environment. The homotetramer reduces the ATPase activity of KaiC3 by 35%. In terms of biological role, a metamorphic protein which reversibly switches between an inactive tetrameric fold and a rare, thioredoxin-like monomeric fold (KaiB(fs)). KaiB(fs) binds phospho-KaiC, KaiA and CikA. KaiA and CikA compete for binding to KaiB(fs), and KaiB(fs) and SasA compete for binding to KaiC, thus the clock oscillator and output signal pathway are tightly coupled. The chain is Circadian clock oscillator protein KaiB1 from Synechocystis sp. (strain ATCC 27184 / PCC 6803 / Kazusa).